The sequence spans 94 residues: ESAT-6-like protein EsxI (94 aa).

It belongs to the WXG100 family. ESAT-6 subfamily.

The protein localises to the secreted. In Mycobacterium tuberculosis (strain ATCC 25618 / H37Rv), this protein is ESAT-6-like protein EsxI.